Here is a 693-residue protein sequence, read N- to C-terminus: eEF1A lysine and N-terminal methyltransferase (693 aa).

This sequence belongs to the methyltransferase superfamily.

It carries out the reaction L-lysyl-[protein] + S-adenosyl-L-methionine = N(6)-methyl-L-lysyl-[protein] + S-adenosyl-L-homocysteine + H(+). It catalyses the reaction N(6)-methyl-L-lysyl-[protein] + S-adenosyl-L-methionine = N(6),N(6)-dimethyl-L-lysyl-[protein] + S-adenosyl-L-homocysteine + H(+). The catalysed reaction is N-terminal glycyl-L-lysyl-L-glutamyl-[protein] + 3 S-adenosyl-L-methionine = N-terminal N,N,N-trimethyl-glycyl-L-lysyl-L-glutamyl-[protein] + 3 S-adenosyl-L-homocysteine + 3 H(+). Its function is as follows. Dual methyltransferase that catalyzes methylation of elongation factor 1-alpha (eef1a1 and eef1a2) at two different positions, and is therefore involved in the regulation of mRNA translation. Via its C-terminus, methylates the N-terminus of eef1a1 and eef1a2. Via its N-terminus dimethylates lysine residues of eef1a1 and eef1a2. The polypeptide is eEF1A lysine and N-terminal methyltransferase (mettl13) (Xenopus laevis (African clawed frog)).